The primary structure comprises 539 residues: Carboxypeptidase Y homolog A (539 aa).

The N-terminal stretch at 1 to 17 (MKALTATLLVGTALAAV) is a signal peptide. Positions 18-122 (PPQQPIQVPT…KLEKYDLRVK (105 aa)) are excised as a propeptide. Disulfide bonds link Cys176-Cys416, Cys310-Cys324, Cys334-Cys357, Cys341-Cys350, and Cys379-Cys386. N-linked (GlcNAc...) asparagine glycosylation occurs at Asn207. The active site involves Ser263. Asp455 is an active-site residue. Asn506 carries an N-linked (GlcNAc...) asparagine glycan. Residue His517 is part of the active site.

Belongs to the peptidase S10 family.

The protein resides in the vacuole. It carries out the reaction Release of a C-terminal amino acid with broad specificity.. Vacuolar carboxypeptidase involved in degradation of small peptides. Digests preferentially peptides containing an aliphatic or hydrophobic residue in P1' position, as well as methionine, leucine or phenylalanine in P1 position of ester substrate. The polypeptide is Carboxypeptidase Y homolog A (cpyA) (Coccidioides posadasii (strain C735) (Valley fever fungus)).